A 282-amino-acid chain; its full sequence is 2,3,4,5-tetrahydropyridine-2,6-dicarboxylate N-succinyltransferase (282 aa).

Arginine 109 and aspartate 146 together coordinate substrate.

Belongs to the transferase hexapeptide repeat family. As to quaternary structure, homotrimer.

The protein resides in the cytoplasm. The enzyme catalyses (S)-2,3,4,5-tetrahydrodipicolinate + succinyl-CoA + H2O = (S)-2-succinylamino-6-oxoheptanedioate + CoA. Its pathway is amino-acid biosynthesis; L-lysine biosynthesis via DAP pathway; LL-2,6-diaminopimelate from (S)-tetrahydrodipicolinate (succinylase route): step 1/3. This chain is 2,3,4,5-tetrahydropyridine-2,6-dicarboxylate N-succinyltransferase, found in Bartonella henselae (strain ATCC 49882 / DSM 28221 / CCUG 30454 / Houston 1) (Rochalimaea henselae).